Consider the following 851-residue polypeptide: Nucleolar RNA helicase 2 (851 aa).

The interval 1–260 (MPGKLRSGAK…IPVEQKEGAF (260 aa)) is disordered. 2 positions are modified to phosphoserine: S7 and S13. 2 stretches are compositionally biased toward basic and acidic residues: residues 26 to 42 (PSEK…KTEE) and 99 to 113 (EPLE…KEII). K39 is subject to N6-acetyllysine. A run of 3 repeats spans residues 117 to 153 (PSEE…GLSQ), 154 to 190 (PSEE…GLSQ), and 191 to 227 (PSEE…GLSQ). Residues 117-227 (PSEEEADMPK…SPRLKDGLSQ (111 aa)) are 3 X 37 AA tandem repeats. S118 carries the post-translational modification Phosphoserine. The span at 133 to 145 (GKEANGDAGEKSP) shows a compositional bias: basic and acidic residues. At K134 the chain carries N6-acetyllysine. 9 positions are modified to phosphoserine: S144, S155, S181, S192, S218, S236, S243, S244, and S245. The span at 170-182 (GKEANGDAGEKSP) shows a compositional bias: basic and acidic residues. Over residues 207–223 (GKEASGDAGEKSPRLKD) the composition is skewed to basic and acidic residues. The span at 226 to 237 (SQPSEPKSNSSD) shows a compositional bias: polar residues. The span at 246-257 (ETEKEIPVEQKE) shows a compositional bias: basic and acidic residues. The short motif at 258–286 (GAFSNFPISEETVKLLKARGVNFLFPIQA) is the Q motif element. The Helicase ATP-binding domain maps to 289 to 468 (FHHVYSGKDL…KKYMKSTYEQ (180 aa)). 302–309 (ARTGTGKT) is an ATP binding site. At T368 the chain carries Phosphothreonine. Residues 411 to 414 (DEVD) carry the DEAD box motif. The 145-residue stretch at 501–645 (DVIRVYSGHQ…GVPSATEIIK (145 aa)) folds into the Helicase C-terminal domain. A Phosphoserine modification is found at S639. K672 bears the N6-acetyllysine mark. The disordered stretch occupies residues 783 to 851 (QPELEGPPDG…KRSFSKAFGQ (69 aa)). A run of 3 repeats spans residues 807-811 (FRGQR), 817-823 (FRGQGQR), and 829-833 (FRGQR). The interval 807–833 (FRGQRGGSRNFRGQGQRGGSRNFRGQR) is 3 X 5 AA repeats. K847 is modified (N6-acetyllysine).

The protein belongs to the DEAD box helicase family. DDX21/DDX50 subfamily. In terms of assembly, homodimer; homodimerizes via its N-terminus. Found in a multi-helicase-TICAM1 complex at least composed of DHX36, DDX1, DDX21 and TICAM1; this complex exists in resting cells with or without poly(I:C) RNA ligand stimulation. Interacts (via C-terminus) with TICAM1 (via TIR domain). Interacts with DHX36 (via C-terminus); this interaction serves as bridges to TICAM1. Interacts (via C-terminus) with DDX1 (via B30.2/SPRY domain); this interaction serves as bridges to TICAM1. Component of the B-WICH complex, at least composed of SMARCA5/SNF2H, BAZ1B/WSTF, SF3B1, DEK, MYO1C, ERCC6, MYBBP1A and DDX21. Interacts with C1QBP. Interacts with JUN. Interacts with WDR46. Interacts with MCM3AP. Interacts with WDR43. Interacts with KPNA3. Interacts with GID4. In terms of processing, acetylation by CREBBP/CBP inhibits the helicase activity. Deacetylation by SIRT7 promotes the helicase activity and overcomes R-loop-mediated stalling of RNA polymerases. Highly expressed in liver and testis. Expressed at lower level in brain, lungs, and skeletal muscle.

Its subcellular location is the nucleus. It is found in the nucleolus. The protein localises to the nucleoplasm. It localises to the cytoplasm. The protein resides in the cytosol. Its subcellular location is the mitochondrion. It catalyses the reaction ATP + H2O = ADP + phosphate + H(+). Acetylation inhibits the helicase activity. RNA helicase that acts as a sensor of the transcriptional status of both RNA polymerase (Pol) I and II: promotes ribosomal RNA (rRNA) processing and transcription from polymerase II (Pol II). Binds various RNAs, such as rRNAs, snoRNAs, 7SK and, at lower extent, mRNAs. In the nucleolus, localizes to rDNA locus, where it directly binds rRNAs and snoRNAs, and promotes rRNA transcription, processing and modification. Required for rRNA 2'-O-methylation, possibly by promoting the recruitment of late-acting snoRNAs SNORD56 and SNORD58 with pre-ribosomal complexes. In the nucleoplasm, binds 7SK RNA and is recruited to the promoters of Pol II-transcribed genes: acts by facilitating the release of P-TEFb from inhibitory 7SK snRNP in a manner that is dependent on its helicase activity, thereby promoting transcription of its target genes. Functions as cofactor for JUN-activated transcription: required for phosphorylation of JUN at 'Ser-77'. Can unwind double-stranded RNA (helicase) and can fold or introduce a secondary structure to a single-stranded RNA (foldase). Together with SIRT7, required to prevent R-loop-associated DNA damage and transcription-associated genomic instability: deacetylation by SIRT7 activates the helicase activity, thereby overcoming R-loop-mediated stalling of RNA polymerases. Involved in rRNA processing. May bind to specific miRNA hairpins. Component of a multi-helicase-TICAM1 complex that acts as a cytoplasmic sensor of viral double-stranded RNA (dsRNA) and plays a role in the activation of a cascade of antiviral responses including the induction of pro-inflammatory cytokines via the adapter molecule TICAM1. This chain is Nucleolar RNA helicase 2 (Ddx21), found in Mus musculus (Mouse).